The primary structure comprises 73 residues: Aminopeptidase G (73 aa).

The interval 39-73 is disordered; sequence GRRAASSSWPGRGSSRRWRPGRRTGAAARGCWRAP. Composition is skewed to low complexity over residues 42 to 51 and 61 to 73; these read AASSSWPGRG and RTGA…WRAP.

This sequence belongs to the peptidase M1 family. Requires Zn(2+) as cofactor.

The protein localises to the cytoplasm. Hydrolyzes preferentially the N-terminal glycine and can also hydrolyze other amino acids which are used by PepN but is unable to hydrolyze basic amino acids. The chain is Aminopeptidase G (pepG) from Streptomyces lividans.